We begin with the raw amino-acid sequence, 206 residues long: Large ribosomal subunit protein uL3 (206 aa).

Residues 127–151 form a disordered region; sequence SGGPSSHGSKFHRHLGGTGQATTPA.

The protein belongs to the universal ribosomal protein uL3 family. Part of the 50S ribosomal subunit. Forms a cluster with proteins L14 and L19.

Functionally, one of the primary rRNA binding proteins, it binds directly near the 3'-end of the 23S rRNA, where it nucleates assembly of the 50S subunit. The sequence is that of Large ribosomal subunit protein uL3 from Borreliella burgdorferi (strain ZS7) (Borrelia burgdorferi).